A 278-amino-acid polypeptide reads, in one-letter code: Potassium/proton antiporter CemA (278 aa).

Transmembrane regions (helical) follow at residues 60–80 (YLLL…SFVF), 155–175 (AMKN…LIVT), 201–221 (FLII…GWEV), and 239–259 (IFLF…YWIF).

This sequence belongs to the CemA family.

Its subcellular location is the plastid. It is found in the chloroplast inner membrane. It catalyses the reaction K(+)(in) + H(+)(out) = K(+)(out) + H(+)(in). Functionally, contributes to K(+)/H(+) antiport activity by supporting proton efflux to control proton extrusion and homeostasis in chloroplasts in a light-dependent manner to modulate photosynthesis. Prevents excessive induction of non-photochemical quenching (NPQ) under continuous-light conditions. Indirectly promotes efficient inorganic carbon uptake into chloroplasts. The protein is Potassium/proton antiporter CemA of Rhodomonas salina (Cryptomonas salina).